Here is a 128-residue protein sequence, read N- to C-terminus: Small ribosomal subunit protein uS11 (128 aa).

The protein belongs to the universal ribosomal protein uS11 family. Part of the 30S ribosomal subunit. Interacts with proteins S7 and S18. Binds to IF-3.

Located on the platform of the 30S subunit, it bridges several disparate RNA helices of the 16S rRNA. Forms part of the Shine-Dalgarno cleft in the 70S ribosome. The chain is Small ribosomal subunit protein uS11 from Desulforudis audaxviator (strain MP104C).